We begin with the raw amino-acid sequence, 197 residues long: Recombination protein RecR (197 aa).

The C4-type zinc-finger motif lies at 56–71; it reads CQQCRTLTEQALCNIC. Residues 79 to 174 form the Toprim domain; it reads KELCIVETPA…KVSRIAHGIP (96 aa).

It belongs to the RecR family.

Functionally, may play a role in DNA repair. It seems to be involved in an RecBC-independent recombinational process of DNA repair. It may act with RecF and RecO. The polypeptide is Recombination protein RecR (Saccharophagus degradans (strain 2-40 / ATCC 43961 / DSM 17024)).